We begin with the raw amino-acid sequence, 194 residues long: Protein GrpE (194 aa).

It belongs to the GrpE family. In terms of assembly, homodimer.

It is found in the cytoplasm. Participates actively in the response to hyperosmotic and heat shock by preventing the aggregation of stress-denatured proteins, in association with DnaK and GrpE. It is the nucleotide exchange factor for DnaK and may function as a thermosensor. Unfolded proteins bind initially to DnaJ; upon interaction with the DnaJ-bound protein, DnaK hydrolyzes its bound ATP, resulting in the formation of a stable complex. GrpE releases ADP from DnaK; ATP binding to DnaK triggers the release of the substrate protein, thus completing the reaction cycle. Several rounds of ATP-dependent interactions between DnaJ, DnaK and GrpE are required for fully efficient folding. The protein is Protein GrpE of Aliivibrio fischeri (strain ATCC 700601 / ES114) (Vibrio fischeri).